The following is a 386-amino-acid chain: S-(hydroxymethyl)glutathione dehydrogenase (386 aa).

Residue Ser2 is modified to N-acetylserine. Residue Cys49 participates in Zn(2+) binding. Residue His50 participates in NAD(+) binding. Zn(2+) contacts are provided by His71, Glu72, Cys101, Cys104, Cys107, Cys115, and Cys179. Residues 204 to 209 (GCGTVG), Asp228, 300 to 302 (IGV), and 325 to 327 (SAF) contribute to the NAD(+) site.

This sequence belongs to the zinc-containing alcohol dehydrogenase family. Class-III subfamily. It depends on Zn(2+) as a cofactor.

It localises to the cytoplasm. The protein localises to the mitochondrion. It catalyses the reaction a primary alcohol + NAD(+) = an aldehyde + NADH + H(+). The catalysed reaction is a secondary alcohol + NAD(+) = a ketone + NADH + H(+). It carries out the reaction S-(hydroxymethyl)glutathione + NADP(+) = S-formylglutathione + NADPH + H(+). The enzyme catalyses S-(hydroxymethyl)glutathione + NAD(+) = S-formylglutathione + NADH + H(+). It catalyses the reaction S-nitrosoglutathione + NADH + H(+) = S-(hydroxysulfenamide)glutathione + NAD(+). Oxidizes long-chain alcohols and, in the presence of glutathione, is able to oxidize formaldehyde. Is responsible for yeast resistance to formaldehyde. Also acts as a S-nitroso-glutathione reductase by catalyzing the NADH-dependent reduction of S-nitrosoglutathione, thereby regulating protein S-nitrosylation. In Saccharomyces cerevisiae (strain ATCC 204508 / S288c) (Baker's yeast), this protein is S-(hydroxymethyl)glutathione dehydrogenase (SFA1).